A 108-amino-acid polypeptide reads, in one-letter code: Protein FMC1 homolog (108 aa).

The protein belongs to the FMC1 family.

The polypeptide is Protein FMC1 homolog (Caenorhabditis elegans).